Here is a 50-residue protein sequence, read N- to C-terminus: Insulin-1 (50 aa).

3 cysteine pairs are disulfide-bonded: cysteine 7–cysteine 36, cysteine 19–cysteine 49, and cysteine 35–cysteine 40.

Belongs to the insulin family. In terms of assembly, heterodimer of a B chain and an A chain linked by two disulfide bonds.

Its subcellular location is the secreted. Insulin decreases blood glucose concentration. It increases cell permeability to monosaccharides, amino acids and fatty acids. It accelerates glycolysis, the pentose phosphate cycle, and glycogen synthesis in liver. The sequence is that of Insulin-1 from Thunnus orientalis (North Pacific bluefin tuna).